A 345-amino-acid chain; its full sequence is Dihydroorotate dehydrogenase (quinone) (345 aa).

Residues 65–69 (AGLDK) and Thr-89 contribute to the FMN site. Lys-69 is a binding site for substrate. 114–118 (NRMGF) is a substrate binding site. The FMN site is built by Asn-142 and Asn-175. Asn-175 contributes to the substrate binding site. Catalysis depends on Ser-178, which acts as the Nucleophile. Asn-180 is a binding site for substrate. 2 residues coordinate FMN: Lys-220 and Thr-248. 249–250 (NT) lines the substrate pocket. FMN-binding positions include Gly-271, Gly-300, and 321–322 (YT).

Belongs to the dihydroorotate dehydrogenase family. Type 2 subfamily. As to quaternary structure, monomer. FMN serves as cofactor.

The protein resides in the cell membrane. The enzyme catalyses (S)-dihydroorotate + a quinone = orotate + a quinol. It functions in the pathway pyrimidine metabolism; UMP biosynthesis via de novo pathway; orotate from (S)-dihydroorotate (quinone route): step 1/1. Its function is as follows. Catalyzes the conversion of dihydroorotate to orotate with quinone as electron acceptor. The sequence is that of Dihydroorotate dehydrogenase (quinone) from Burkholderia lata (strain ATCC 17760 / DSM 23089 / LMG 22485 / NCIMB 9086 / R18194 / 383).